Consider the following 364-residue polypeptide: Medium-wave-sensitive opsin 1 (364 aa).

Residues 1-24 (MAQRWDPQRLAGGQPQDSHEDSTQ) form a disordered region. Residues 1 to 52 (MAQRWDPQRLAGGQPQDSHEDSTQSSIFTYTNSNATRGPFEGPNYHIAPRWV) lie on the Extracellular side of the membrane. Residues 17-43 (DSHEDSTQSSIFTYTNSNATRGPFEGP) are required for 11-cis-retinal regeneration. Residue Asn-34 is glycosylated (N-linked (GlcNAc...) asparagine). Residues 53 to 77 (YHITSTWMIIVVIASVFTNGLVLVA) traverse the membrane as a helical segment. Residues 78–89 (TMKFKKLRHPLN) lie on the Cytoplasmic side of the membrane. The chain crosses the membrane as a helical span at residues 90-115 (WILVNLAIADLAETVIASTISVVNQL). At 116 to 129 (YGYFVLGHPLCVVE) the chain is on the extracellular side. Cys-126 and Cys-203 form a disulfide bridge. Residues 130–149 (GYTVSVCGITGLWSLAIISW) form a helical membrane-spanning segment. Over 150–168 (ERWLVVCKPFGNMRFDAKL) the chain is Cytoplasmic. A helical membrane pass occupies residues 169–192 (AIVGIAFSWIWSAVWTAPPIFGWS). Topologically, residues 193–218 (RYWPYGLKTSCGPDVFSGTSYPGVQS) are extracellular. The helical transmembrane segment at 219–246 (YMMVLMVTCCIIPLSIIILCYLQVWLAI) threads the bilayer. The Cytoplasmic portion of the chain corresponds to 247–268 (RAVAKQQKESESTQKAEKEVTR). A helical membrane pass occupies residues 269–292 (MVVVMVFAYCLCWGPYTFFACFAT). Over 293–300 (ANPGYAFH) the chain is Extracellular. A helical membrane pass occupies residues 301–320 (PLVAALPAYFAKSATIYNPI). Lys-312 is subject to N6-(retinylidene)lysine. Over 321–364 (IYVFMNRQFRNCILQLFGKKVDDTSELSSASKTEASSVSSVSPA) the chain is Cytoplasmic.

The protein belongs to the G-protein coupled receptor 1 family. Opsin subfamily. In terms of assembly, monomer. Homodimer. Homotetramer. Post-translationally, O-glycosylated. Phosphorylated on some or all of the serine and threonine residues present in the C-terminal region. In terms of tissue distribution, expressed in cone photoreceptor cells.

It is found in the membrane. Functionally, visual pigments are the light-absorbing molecules that mediate vision. They consist of an apoprotein, opsin, covalently linked to cis-retinal. May increase spectral sensitivity in dim light. The protein is Medium-wave-sensitive opsin 1 (OPN1MW) of Sciurus carolinensis (Eastern gray squirrel).